The following is a 378-amino-acid chain: 3-ketosteroid-9-alpha-monooxygenase, oxygenase component (378 aa).

A Rieske domain is found at 26 to 128; that stretch reads WHCIGLAKDF…TMERNGVLFV (103 aa). 4 residues coordinate [2Fe-2S] cluster: Cys-67, His-69, Cys-86, and His-89. 4 residues coordinate Fe cation: Asn-175, His-181, His-186, and Asp-305.

Homotrimer. The two-component system 3-ketosteroid-9-alpha-monooxygenase is composed of an oxygenase component KshA and a reductase component KshB. The cofactor is [2Fe-2S] cluster. It depends on Fe cation as a cofactor.

It carries out the reaction androsta-1,4-diene-3,17-dione + 2 reduced [2Fe-2S]-[ferredoxin] + O2 + 2 H(+) = 9alpha-hydroxyandrosta-1,4-diene-3,17-dione + 2 oxidized [2Fe-2S]-[ferredoxin] + H2O. KSH activity is completely inhibited by zinc ions. KshA is specifically inhibited by Fe(3+), Co(2+), Zn(2+) and Ni(2+) ions. In vitro, catalyzes the introduction of a 9alpha-hydroxyl moiety into the ring B of 3-ketosteroid substrates such as 1,4-androstadiene-3,17-dione (ADD), 4-androstene-3,17-dione (AD), 4-androstene-17beta-ol-3-one (testosterone), 4-pregnene-3,20-dione (progesterone), 19-nor-4-androstene-3,17-dione (nordion), 1-(5alpha)-androstene-3,17-dione, 5alpha-androstane-3,17-dione and 5beta-androstane-3,17-dione. KSH has the highest activity with 3-keto-delta4 steroid substrates. The polypeptide is 3-ketosteroid-9-alpha-monooxygenase, oxygenase component (Rhodococcus rhodochrous).